We begin with the raw amino-acid sequence, 403 residues long: Solanesyl-diphosphate synthase 2, chloroplastic (403 aa).

The N-terminal 62 residues, 1–62 (MLSVSCPRVY…QPGLAAVDVP (62 aa)), are a transit peptide targeting the chloroplast. Residues K123, R126, and H161 each contribute to the isopentenyl diphosphate site. D168 and D172 together coordinate Mg(2+). Residue R177 coordinates an all-trans-polyprenyl diphosphate. Isopentenyl diphosphate is bound at residue R178. Residues K254, T255, Q292, and K309 each coordinate an all-trans-polyprenyl diphosphate.

The protein belongs to the FPP/GGPP synthase family. As to quaternary structure, homodimer. Interacts with FBN5. It depends on Mg(2+) as a cofactor. In terms of tissue distribution, expressed in leaves, stems and roots. Highest expression in leaves and roots.

It localises to the plastid. It is found in the chloroplast. The enzyme catalyses 7 isopentenyl diphosphate + (2E)-geranyl diphosphate = all-trans-nonaprenyl diphosphate + 7 diphosphate. Functionally, involved in providing solanesyl diphosphate for plastoquinone-9 (PQ-9) formation. Geranyl diphosphate is the preferred substrate. The chain is Solanesyl-diphosphate synthase 2, chloroplastic from Oryza sativa subsp. japonica (Rice).